Here is a 151-residue protein sequence, read N- to C-terminus: Guanylate kinase homolog (151 aa).

Positions 1 to 141 (MEREGVDYHY…AYSKLIQILQ (141 aa)) constitute a Guanylate kinase-like domain.

The protein belongs to the guanylate kinase family.

The chain is Guanylate kinase homolog from Bos taurus (Bovine).